A 30-amino-acid polypeptide reads, in one-letter code: ANFEIVNNCPYTVWAAASPGGGRRLDRGQT.

Belongs to the thaumatin family.

The protein localises to the secreted. Its function is as follows. Has antifungal activity against C.comatus, F.oxysporum and P.ostreatus. In Phaseolus vulgaris (Kidney bean), this protein is Thaumatin-like protein.